A 132-amino-acid chain; its full sequence is Small ribosomal subunit protein uS8 (132 aa).

This sequence belongs to the universal ribosomal protein uS8 family. Part of the 30S ribosomal subunit. Contacts proteins S5 and S12.

In terms of biological role, one of the primary rRNA binding proteins, it binds directly to 16S rRNA central domain where it helps coordinate assembly of the platform of the 30S subunit. The sequence is that of Small ribosomal subunit protein uS8 from Mycobacterium avium (strain 104).